Reading from the N-terminus, the 272-residue chain is Dermonecrotic toxin LvSicTox-alphaIC1aiii (272 aa).

The active site involves His4. Residues Glu24 and Asp26 each coordinate Mg(2+). The active-site Nucleophile is the His40. 2 disulfides stabilise this stretch: Cys44/Cys50 and Cys46/Cys189. Asp84 provides a ligand contact to Mg(2+).

This sequence belongs to the arthropod phospholipase D family. Class II subfamily. Mg(2+) is required as a cofactor. In terms of tissue distribution, expressed by the venom gland.

The protein localises to the secreted. It catalyses the reaction an N-(acyl)-sphingosylphosphocholine = an N-(acyl)-sphingosyl-1,3-cyclic phosphate + choline. It carries out the reaction an N-(acyl)-sphingosylphosphoethanolamine = an N-(acyl)-sphingosyl-1,3-cyclic phosphate + ethanolamine. The catalysed reaction is a 1-acyl-sn-glycero-3-phosphocholine = a 1-acyl-sn-glycero-2,3-cyclic phosphate + choline. The enzyme catalyses a 1-acyl-sn-glycero-3-phosphoethanolamine = a 1-acyl-sn-glycero-2,3-cyclic phosphate + ethanolamine. Functionally, dermonecrotic toxins cleave the phosphodiester linkage between the phosphate and headgroup of certain phospholipids (sphingolipid and lysolipid substrates), forming an alcohol (often choline) and a cyclic phosphate. This toxin acts on sphingomyelin (SM). It may also act on ceramide phosphoethanolamine (CPE), lysophosphatidylcholine (LPC) and lysophosphatidylethanolamine (LPE), but not on lysophosphatidylserine (LPS), and lysophosphatidylglycerol (LPG). It acts by transphosphatidylation, releasing exclusively cyclic phosphate products as second products. Induces dermonecrosis, hemolysis, increased vascular permeability, edema, inflammatory response, and platelet aggregation. This Loxosceles variegata (Recluse spider) protein is Dermonecrotic toxin LvSicTox-alphaIC1aiii.